The following is a 366-amino-acid chain: Ferredoxin--NADP reductase, leaf isozyme 2, chloroplastic (366 aa).

A chloroplast-targeting transit peptide spans 1-48 (MAAVNTVSSLPCSKAGAAVAGGAPRPSTCSVFYPPRCWSKRSSGNGVR). The FAD-binding FR-type domain occupies 87–209 (KEPYTGRCLL…TGPVGKEMLM (123 aa)). FAD-binding positions include 145–148 (RLYS), 166–168 (CVK), Y172, and 183–185 (VCS). NADP(+) is bound by residues S148 and K168. An intrachain disulfide couples C184 to C189. Position 185 is a phosphoserine (S185). The residue at position 216 (T216) is a Phosphothreonine. An FAD-binding site is contributed by T224. NADP(+) contacts are provided by residues T224, 256-257 (VP), 286-287 (SR), K296, 325-326 (GL), and E364.

This sequence belongs to the ferredoxin--NADP reductase type 1 family. Heterodimer with LFNR1. Component of high molecular weight thylakoid LFNRs-containing protein complexes containing LIR1, LFNR1, LFNR2, TIC62 and TROL proteins. Interacts directly with LFNR1 and LFNR2; LIR1 increases the affinity of LFNR1 and LFNR2 for TIC62 and subsequent thylakoid relocalization. The cofactor is FAD. In terms of processing, may form interchain disulfide bonds with LIR1.

The protein localises to the plastid. It is found in the chloroplast stroma. It localises to the chloroplast thylakoid membrane. It carries out the reaction 2 reduced [2Fe-2S]-[ferredoxin] + NADP(+) + H(+) = 2 oxidized [2Fe-2S]-[ferredoxin] + NADPH. It participates in energy metabolism; photosynthesis. In terms of biological role, plays a key role in regulating the relative amounts of cyclic and non-cyclic electron flow to meet the demands of the plant for ATP and reducing power. The protein is Ferredoxin--NADP reductase, leaf isozyme 2, chloroplastic of Oryza sativa subsp. indica (Rice).